Reading from the N-terminus, the 757-residue chain is Protein Lines homolog 1 (757 aa).

At Ser635 the chain carries Phosphoserine.

It belongs to the protein lines family. Expressed in adult testis, prostate, prostate, spleen, thymus, skeletal muscle, fetal kidney and brain.

In Homo sapiens (Human), this protein is Protein Lines homolog 1.